The following is a 118-amino-acid chain: Ribosome-binding factor A (118 aa).

The protein belongs to the RbfA family. Monomer. Binds 30S ribosomal subunits, but not 50S ribosomal subunits or 70S ribosomes.

The protein localises to the cytoplasm. One of several proteins that assist in the late maturation steps of the functional core of the 30S ribosomal subunit. Associates with free 30S ribosomal subunits (but not with 30S subunits that are part of 70S ribosomes or polysomes). Required for efficient processing of 16S rRNA. May interact with the 5'-terminal helix region of 16S rRNA. This Bacillus anthracis (strain A0248) protein is Ribosome-binding factor A.